Here is a 337-residue protein sequence, read N- to C-terminus: Anthranilate phosphoribosyltransferase (337 aa).

Residues G81, 84-85 (GD), S89, 91-94 (NVST), 109-117 (KHGNRAATS), and A121 each bind 5-phospho-alpha-D-ribose 1-diphosphate. Position 81 (G81) interacts with anthranilate. S93 is a Mg(2+) binding site. Position 112 (N112) interacts with anthranilate. R167 provides a ligand contact to anthranilate. Mg(2+) is bound by residues D226 and E227.

The protein belongs to the anthranilate phosphoribosyltransferase family. Homodimer. Mg(2+) serves as cofactor.

It catalyses the reaction N-(5-phospho-beta-D-ribosyl)anthranilate + diphosphate = 5-phospho-alpha-D-ribose 1-diphosphate + anthranilate. Its pathway is amino-acid biosynthesis; L-tryptophan biosynthesis; L-tryptophan from chorismate: step 2/5. Catalyzes the transfer of the phosphoribosyl group of 5-phosphorylribose-1-pyrophosphate (PRPP) to anthranilate to yield N-(5'-phosphoribosyl)-anthranilate (PRA). In Methylorubrum populi (strain ATCC BAA-705 / NCIMB 13946 / BJ001) (Methylobacterium populi), this protein is Anthranilate phosphoribosyltransferase.